The chain runs to 284 residues: N-methyltransferase sirN (284 aa).

This sequence belongs to the methyltransferase superfamily. LaeA methyltransferase family.

It functions in the pathway mycotoxin biosynthesis. Its function is as follows. N-methyltransferase; part of the gene cluster that mediates the biosynthesis of sirodesmin PL, an epipolythiodioxopiperazine (ETP) characterized by a disulfide bridged cyclic dipeptide and that acts as a phytotoxin which is involved in the blackleg didease of canola. SirD catalyzes the O-prenylation of L-tyrosine (L-Tyr) in the presence of dimethylallyl diphosphate (DMAPP) to yield 4-O-dimethylallyl-L-Tyr, and therefore represents probably the first pathway-specific enzyme in the biosynthesis of sirodesmin PL. 4-O-dimethylallyl-L-Tyr, then undergoes condensation with L-Ser in a reaction catalyzed by the non-ribosomal peptide synthase sirP to form the diketopiperazine (DKP) backbone. Further bishydroxylation of the DKP performed by the cytochrome P450 monooxygenase sirC leads to the production of the intermediate phomamide. This step is essential to form the reactive thiol group required for toxicity of sirodesmin PL. The next steps of sirodesmin biosynthesis are not well understood yet but some predictions could be made from intermediate compounds identification. Phomamide is converted into phomalizarine via oxidation, probably by sirT. Further oxidation, methylation (by sirM or sirN) and reduction steps convert phomalizarine to deacetyl sirodesmin. Finally, acetyltransferase sirH probably acetylates deacetyl sirodesmin to produce sirodesmin PL. This Leptosphaeria maculans (Blackleg fungus) protein is N-methyltransferase sirN.